The sequence spans 965 residues: Collagen alpha-1(I) chain (965 aa).

Residues 1–965 (GGISVPGPMG…PGPPGPPGPP (965 aa)) form a disordered region. Residues proline 18, proline 21, proline 23, proline 32, proline 35, proline 38, proline 53, proline 68, proline 74, proline 83, and proline 89 each carry the 4-hydroxyproline modification. Positions 26 to 44 (QGFQGPPGEPGEPGSSGPM) are enriched in low complexity. Over residues 56-70 (NGDDGEAGKPGRPGE) the composition is skewed to basic and acidic residues. The residue at position 92 (lysine 92) is a 5-hydroxylysine; alternate. The O-linked (Gal...) hydroxylysine; alternate glycan is linked to lysine 92. Serine 98 carries the post-translational modification Phosphoserine. Over residues 106-122 (DAGPAGPKGEPGSPGEN) the composition is skewed to low complexity. 15 positions are modified to 4-hydroxyproline: proline 116, proline 119, proline 125, proline 139, proline 160, proline 169, proline 172, proline 199, proline 202, proline 214, proline 220, proline 229, proline 235, proline 238, and proline 253. Residues 139–157 (PGASGPAGARGNDGATGAA) are compositionally biased toward low complexity. A compositionally biased stretch (pro residues) spans 159–171 (PPGPTGPAGPPGF). Residues 205–244 (AGAAGPAGNPGADGQPGAKGANGAPGIAGAPGFPGARGPS) are compositionally biased toward low complexity. Lysine 256 is subject to 5-hydroxylysine. 4-hydroxyproline occurs at positions 262, 265, 269, 278, 293, 299, 308, and 314. Over residues 303–312 (GERGGPGSRG) the composition is skewed to gly residues. Lysine 323 carries the 5-hydroxylysine modification. Residues proline 326, proline 332, proline 338, proline 347, proline 350, proline 359, proline 368, proline 374, proline 386, proline 395, proline 404, proline 407, proline 425, proline 442, proline 448, proline 454, proline 460, proline 466, proline 472, proline 484, proline 493, proline 506, proline 512, and proline 521 each carry the 4-hydroxyproline modification. Residues 341–367 (KGLTGSPGSPGPDGKTGPPGPAGQDGR) show a composition bias toward low complexity. Residues 376-395 (ARGQAGVMGFPGPKGAAGEP) are compositionally biased toward low complexity. The span at 454-463 (PGEAGKPGEQ) shows a compositional bias: low complexity. Residue lysine 533 is modified to 5-hydroxylysine. Residues proline 539, proline 554, and proline 560 each carry the 4-hydroxyproline modification. A compositionally biased stretch (low complexity) spans 566–580 (SGPSGPAGPTGARGA). The residue at position 569 (serine 569) is a Phosphoserine. 4-hydroxyproline is present on residues proline 581, proline 587, proline 590, proline 599, proline 605, proline 623, proline 632, and proline 641. A compositionally biased stretch (low complexity) spans 593–620 (AGFAGPPGADGQPGAKGEPGDAGAKGDA). Residue lysine 644 is modified to 5-hydroxylysine. Residues 649–665 (SAGPPGATGFPGAAGRV) show a composition bias toward low complexity. A 4-hydroxyproline mark is found at proline 653 and proline 659. 3-hydroxyproline is present on proline 667. Proline 668, proline 677, proline 680, proline 716, proline 725, proline 743, proline 752, proline 755, proline 761, proline 776, proline 782, proline 788, proline 796, and proline 802 each carry 4-hydroxyproline. Low complexity predominate over residues 710–725 (SGEKGSPGADGPAGAP). Residues 775-785 (PPGPMGPPGLA) show a composition bias toward pro residues. 5-hydroxylysine is present on lysine 811. A 4-hydroxyproline mark is found at proline 819, proline 822, and proline 825. Over residues 819-831 (PGAPGAPGAPGPV) the composition is skewed to pro residues. A compositionally biased stretch (low complexity) spans 851–865 (AGPAGARGPAGPQGP). Residues 866 to 880 (RGDKGETGEQGDRGI) are compositionally biased toward basic and acidic residues. Position 869 is a 5-hydroxylysine (lysine 869). Lysine 881 carries the post-translational modification 5-hydroxylysine; alternate. Lysine 881 is a glycosylation site (O-linked (Gal...) hydroxylysine; alternate). 4-hydroxyproline occurs at positions 896, 899, 917, and 932. The span at 899-932 (PGEQGPSGASGPAGPRGPPGSAGSPGKDGLNGLP) shows a compositional bias: low complexity. At proline 937 the chain carries 3-hydroxyproline. A 4-hydroxyproline modification is found at proline 938. Positions 950 to 965 (VGPPGPPGPPGPPGPP) are enriched in pro residues. Position 952 is a 3-hydroxyproline (proline 952). 4-hydroxyproline is present on proline 953. Proline 955 bears the 3-hydroxyproline mark. 4-hydroxyproline is present on proline 956. Proline 958 carries the 3-hydroxyproline modification. A 4-hydroxyproline mark is found at proline 959, proline 962, and proline 965.

This sequence belongs to the fibrillar collagen family. As to quaternary structure, trimers of one alpha 2(I) and two alpha 1(I) chains. Contains mostly 4-hydroxyproline. Proline residues at the third position of the tripeptide repeating unit (G-X-Y) are hydroxylated in some or all of the chains. Post-translationally, contains 3-hydroxyproline at a few sites. This modification occurs on the first proline residue in the sequence motif Gly-Pro-Hyp, where Hyp is 4-hydroxyproline. In terms of processing, lysine residues at the third position of the tripeptide repeating unit (G-X-Y) are 5-hydroxylated in some or all of the chains. O-glycosylated on hydroxylated lysine residues. The O-linked glycan consists of a Glc-Gal disaccharide. In terms of tissue distribution, expressed in bones.

The protein resides in the secreted. The protein localises to the extracellular space. Its subcellular location is the extracellular matrix. Functionally, type I collagen is a member of group I collagen (fibrillar forming collagen). The polypeptide is Collagen alpha-1(I) chain (Acratocnus sp. (strain SLP-2019) (Ground sloth)).